A 240-amino-acid polypeptide reads, in one-letter code: 2,3,4,5-tetrahydropyridine-2,6-dicarboxylate N-acetyltransferase (240 aa).

This sequence belongs to the transferase hexapeptide repeat family. DapH subfamily.

The enzyme catalyses (S)-2,3,4,5-tetrahydrodipicolinate + acetyl-CoA + H2O = L-2-acetamido-6-oxoheptanedioate + CoA. It functions in the pathway amino-acid biosynthesis; L-lysine biosynthesis via DAP pathway; LL-2,6-diaminopimelate from (S)-tetrahydrodipicolinate (acetylase route): step 1/3. In terms of biological role, catalyzes the transfer of an acetyl group from acetyl-CoA to tetrahydrodipicolinate. The chain is 2,3,4,5-tetrahydropyridine-2,6-dicarboxylate N-acetyltransferase from Bacillus cytotoxicus (strain DSM 22905 / CIP 110041 / 391-98 / NVH 391-98).